The sequence spans 278 residues: NADPH-dependent 7-cyano-7-deazaguanine reductase (278 aa).

Position 87–89 (87–89 (IES)) interacts with substrate. 89–90 (SK) lines the NADPH pocket. Cys185 serves as the catalytic Thioimide intermediate. Asp192 functions as the Proton donor in the catalytic mechanism. 224–225 (HE) lines the substrate pocket. An NADPH-binding site is contributed by 253–254 (RG). The segment at 255–278 (GLDINPYRSTNPTFSVQNHRSFRQ) is disordered. Residues 261-278 (YRSTNPTFSVQNHRSFRQ) show a composition bias toward polar residues.

Belongs to the GTP cyclohydrolase I family. QueF type 2 subfamily. As to quaternary structure, homodimer.

The protein resides in the cytoplasm. It carries out the reaction 7-aminomethyl-7-carbaguanine + 2 NADP(+) = 7-cyano-7-deazaguanine + 2 NADPH + 3 H(+). It participates in tRNA modification; tRNA-queuosine biosynthesis. In terms of biological role, catalyzes the NADPH-dependent reduction of 7-cyano-7-deazaguanine (preQ0) to 7-aminomethyl-7-deazaguanine (preQ1). The protein is NADPH-dependent 7-cyano-7-deazaguanine reductase of Coxiella burnetii (strain CbuK_Q154) (Coxiella burnetii (strain Q154)).